The sequence spans 578 residues: Vi polysaccharide biosynthesis protein VipC/TviE (578 aa).

It participates in glycan metabolism; Vi-antigen biosynthesis. The protein operates within capsule biogenesis; capsule polysaccharide biosynthesis. This Salmonella typhi protein is Vi polysaccharide biosynthesis protein VipC/TviE (vipC).